The primary structure comprises 371 residues: MTDPAVTPLAFSIPQLYCPFPTAIHPEVDTLTRAGMDFMTHHGFCNTEADRLVVANIDAGAIVARWYPNPDFPVDRLQMVTDFLYLYFLIDDLRFEVINSDTGLAGPIALFAQHLDLWEYPQAHRREELDLFHQAIHDLASRMAELTTPTKAARMRRSINGWFLALLREIALFNDDHAVMAEEYLPIRVVTVASRLMIDVNGFICPAEVPGDEWYSLKVQAAAEAAMSVCLYDNELYSAGKEQWLKSRATAHDRRPRNLVALIQAQTGGSTEHALQEVAEYRNRTVCLYLNLRSQLEKTASPALLAYLSVLDGVISGNLDAHATSSRYHNPDGHHPHAIAFTPLRTTDECSARAHTPIAPPIAWWWEQLDQ.

Mg(2+)-binding residues include Asn234, Ser238, and Glu242.

This sequence belongs to the terpene synthase family. As to quaternary structure, homodimer. Requires Mg(2+) as cofactor.

It carries out the reaction (2E,6E,10E)-geranylgeranyl diphosphate = cembrene C + diphosphate. The enzyme catalyses (2E,6E,10E)-geranylgeranyl diphosphate + H2O = (R)-nephthenol + diphosphate. Diterpene cyclases that can form multiple diterpene products. This chain is Diterpene cyclase DtcycA, found in Streptomyces sp.